A 634-amino-acid polypeptide reads, in one-letter code: Pescadillo homolog (634 aa).

The 94-residue stretch at 321–414 (RLRTLFKGLK…QLLPTNKYFM (94 aa)) folds into the BRCT domain. Disordered regions lie at residues 437-473 (EEKALHDPSLIETHVQSDDDDDDSDAEADNQEEEEIE), 491-561 (EYKK…RKAE), and 603-634 (NIDADAKEAKKTAKREAKKAAAEAAAKALKMA). Ser453 is modified (phosphoserine). 2 stretches are compositionally biased toward acidic residues: residues 454-473 (DDDDDDSDAEADNQEEEEIE) and 501-527 (VNEDEEDSVDDDDEEDEEEEEEEDVEQ). 2 coiled-coil regions span residues 460–546 (SDAE…KVES) and 596–629 (LLRKKRRNIDADAKEAKKTAKREAKKAAAEAAAK). 2 stretches are compositionally biased toward basic and acidic residues: residues 528 to 548 (LDDKTKRLLEEKQKMKVESGK) and 603 to 623 (NIDADAKEAKKTAKREAKKAA). Low complexity predominate over residues 624-634 (AEAAAKALKMA).

It belongs to the pescadillo family.

It is found in the nucleus. The protein resides in the nucleolus. The protein localises to the nucleoplasm. Functionally, required for maturation of ribosomal RNAs and formation of the large ribosomal subunit. The protein is Pescadillo homolog of Drosophila willistoni (Fruit fly).